Consider the following 762-residue polypeptide: Putative cation exchanger YDL206W (762 aa).

A signal peptide spans 1-26 (MHKPLRWLITIAFYVSNVILIGYSLS). Topologically, residues 27 to 30 (SNGS) are extracellular. Asparagine 28 carries N-linked (GlcNAc...) asparagine glycosylation. The chain crosses the membrane as a helical span at residues 31 to 51 (ISEFYLHSVVLIECFSLLGVV). Over 52-102 (TSDCLTPSLSYISSNIFHISDRVSGMTLLALGNALPDITSTYQSMKSGVTS) the chain is Cytoplasmic. A helical membrane pass occupies residues 103 to 123 (LAIGELFGGIFFLLTVVIGLM). The Extracellular segment spans residues 124 to 156 (GCVATIQFQHDKSIETYTEESFDQNLSYDRSNY). An N-linked (GlcNAc...) asparagine glycan is attached at asparagine 148. A helical transmembrane segment spans residues 157-177 (ILDVGIFTFMLLVSGTFLADG). A topological domain (cytoplasmic) is located at residue arginine 178. A helical transmembrane segment spans residues 179-199 (LYFWECIVMVLTYCCCAVYLI). Residues 200–501 (KSYKYPCEIN…YNYLTDVSLE (302 aa)) are Extracellular-facing. Asparagine 280 and asparagine 329 each carry an N-linked (GlcNAc...) asparagine glycan. The helical transmembrane segment at 502–522 (IGFFEFLSLLVTTPVSIILYL) threads the bilayer. Topologically, residues 523 to 554 (SIPSEISQTDHDLPLSYLQNIQLIASPIILNQ) are cytoplasmic. A helical membrane pass occupies residues 555-575 (LITNNFSFWLLILSLVIAILL). The Extracellular portion of the chain corresponds to 576–589 (YFKTRTIPNKFNSD). Residues 590–610 (IIFTVAFLLSLACLSKAVHII) form a helical membrane-spanning segment. Topologically, residues 611–615 (VVTLT) are cytoplasmic. The helical transmembrane segment at 616–636 (HWINVFNISETILGLTIFTWG) threads the bilayer. Topologically, residues 637–650 (NSIGDLVSNITFVK) are extracellular. Asparagine 645 carries N-linked (GlcNAc...) asparagine glycosylation. A helical membrane pass occupies residues 651–671 (IGVLEIAIGACFGSPLLYFLF). Topologically, residues 672–709 (GVGFDGIMIMLGDKTGKIVSGRDSNILMHHIDFKVDKN) are cytoplasmic. A helical transmembrane segment spans residues 710–730 (LINTGVGILIAFLIFTVLIPL). The Extracellular segment spans residues 731–738 (NDWKIDKK). The chain crosses the membrane as a helical span at residues 739–759 (ISIALLTLYIVVTCISVFLEV). Residues 760–762 (HQV) are Cytoplasmic-facing.

This sequence belongs to the Ca(2+):cation antiporter (CaCA) (TC 2.A.19) family.

Its subcellular location is the membrane. Its function is as follows. Putative cation exchanger. The sequence is that of Putative cation exchanger YDL206W from Saccharomyces cerevisiae (strain ATCC 204508 / S288c) (Baker's yeast).